A 384-amino-acid chain; its full sequence is MQFKPAVTALVSAVALATLLSGCKKEEAAPAAQAPQVGVVTIQPQAFTLTSELPGRTSAYRVAEVRPQVNGIILKRLFKEGSEVKEGQQLYQIDPAVYEATLANAKANLLATRSLAERYKQLIDEQAVSKQEYDDANAKRLQAEASLKSAQIDLRYTKVLAPISGRIGRSSFTEGALVSNGQTDAMATIQQLDPIYVDVTQSTAELLKLRRDLESGQLQKAGNNAASVQLVLEDGSLFKQEGRLEFSEVAVDETTGSVTLRALFPNPDHTLLPGMFVHARLKAGVNANAILAPQQGVTRDLKGAPTALVVNQENKVELRQLKASRTLGSDWLIEEGLNPGDRLITEGLQYVRPGVEVKVSDATNVKKPAGPDQANAAKADAKAE.

The signal sequence occupies residues 1-22 (MQFKPAVTALVSAVALATLLSG). C23 carries N-palmitoyl cysteine lipidation. C23 carries S-diacylglycerol cysteine lipidation. Residues 115–155 (LAERYKQLIDEQAVSKQEYDDANAKRLQAEASLKSAQIDLR) adopt a coiled-coil conformation. The tract at residues 362–384 (ATNVKKPAGPDQANAAKADAKAE) is disordered. The segment covering 368-378 (PAGPDQANAAK) has biased composition (low complexity).

The protein belongs to the membrane fusion protein (MFP) (TC 8.A.1) family.

It localises to the cell inner membrane. The periplasmic linker protein component of a constitutive organic solvent efflux system. Involved in export of toluene, styrene, m-xylene, propylbenzene and ethylbenzene. Also exports AMP and the antibiotics carbenicillin, nalidixic acid, chloramphenicol and tetracycline. The chain is Toluene efflux pump periplasmic linker protein TtgA (ttgA) from Pseudomonas putida (strain DOT-T1E).